A 637-amino-acid polypeptide reads, in one-letter code: Acyl-CoA ligase cm3C (637 aa).

ATP contacts are provided by residues 282–290 (TSGTSGRQK), 423–428 (HAWGLT), Asp-507, Arg-526, and Lys-624. An SBD1 region spans residues 353 to 423 (DMQRMLGSVA…SLQPSWEFLH (71 aa)). The tract at residues 424–486 (AWGLTETCIV…YKAPNMFVGY (63 aa)) is SBD2.

Belongs to the ATP-dependent AMP-binding enzyme family.

It participates in secondary metabolite biosynthesis. In terms of biological role, acyl-CoA ligase; part of the gene cluster that mediates the biosynthesis of beauveriolides I and III, cyclodepsipeptides acting as inhibitors of the acyl-CoA:cholesterol acyltransferase. The HR-PKS cm3B initiates the biosynthesis of beauveriolides by iteratively catalyzing the formation of the linear polyketide chain. The ATP-dependent acetyl-CoA ligase cm3D converts the polyketide carboxylic acid to a CoA thioester which id shuttled to the first T domain in the NRPS cm3A by the acetyltransferase cm3C. Cm3A contains 13 domains and assembles the polyketide chain, L-phenylalanine, L-alanine, and D-leucine (or D-allo-isoleucine) to form beauveriolide I (or beauveriolide III). The production of both beauveriolides I and III suggests the substrate adaptability of cm3B, using different amino acids as substrates. The protein is Acyl-CoA ligase cm3C of Cordyceps militaris (strain CM01) (Caterpillar fungus).